A 725-amino-acid polypeptide reads, in one-letter code: MAMAMSDSGASRLRRQLESGGFEARLYVKQLSQQSDGDRDLQEHRQRIQALAEETAQNLKRNVYQNYRQFIETAREISYLESEMYQLSHLLTEQKSSLESIPLTLLPAAAAAGAAAASGGEEGVGGAGGRDHLRGQAGFFSTPGGASRDGSGPGEEGKQRTLTTLLEKVEGCRHLLETPGQYLVYNGDLVEYDADHMAQLQRVHGFLMNDCLLVATWLPQRRGMYRYNALYSLDGLAVVNVKDNPPMKDMFKLLMFPESRIFQAENAKIKREWLEVLEDTKRALSEKRRREQEEAAAPRGPPQVTSKATNPFEDDEEEEPAVPEVEEEKVDLSMEWIQELPEDLDVCIAQRDFEGAVDLLDKLNHYLEDKPSPPPVKELRAKVEERVRQLTEVLVFELSPDRSLRGGPKATRRAVSQLIRLGQCTKACELFLRNRAAAVHTAIRQLRIEGATLLYIHKLCHVFFTSLLETAREFEIDFAGTDSGCYSAFVVWARSAMGMFVDAFSKQVFDSKESLSTAAECVKVAKEHCQQLGDIGLDLTFIIHALLVKDIQGALHSYKEIIIEATKHRNSEEMWRRMNLMTPEALGKLKEEMKSCGVSNFEQYTGDDCWVNLSYTVVAFTKQTMGFLEEALKLYFPELHMVLLESLVEIILVAVQHVDYSLRCEQDPEKKAFIRQNASFLYETVLPVVEKRFEEGVGKPAKQLQDLRNASRLIRVNPESTTSVV.

Residue serine 19 is modified to Phosphoserine. A disordered region spans residues 137 to 159 (AGFFSTPGGASRDGSGPGEEGKQ). Threonine 142 carries the phosphothreonine modification. The PH domain occupies 182-282 (YLVYNGDLVE…WLEVLEDTKR (101 aa)). Positions 285 to 328 (SEKRRREQEEAAAPRGPPQVTSKATNPFEDDEEEEPAVPEVEEE) are disordered. The segment covering 312–328 (FEDDEEEEPAVPEVEEE) has biased composition (acidic residues).

This sequence belongs to the EXO84 family. In terms of assembly, the exocyst complex is composed of EXOC1, EXOC2, EXOC3, EXOC4, EXOC5, EXOC6, EXOC7 and EXOC8. Interacts (via PH domain) with GTP-bound RALA and RALB. Interacts with SH3BP1; required for the localization of both SH3BP1 and the exocyst to the leading edge of migrating cells.

The protein resides in the cytoplasm. Its subcellular location is the perinuclear region. It is found in the cell projection. The protein localises to the growth cone. Its function is as follows. Component of the exocyst complex involved in the docking of exocytic vesicles with fusion sites on the plasma membrane. The polypeptide is Exocyst complex component 8 (EXOC8) (Homo sapiens (Human)).